The primary structure comprises 128 residues: Holo-[acyl-carrier-protein] synthase (128 aa).

The Mg(2+) site is built by Asp-8 and Glu-60.

Belongs to the P-Pant transferase superfamily. AcpS family. Requires Mg(2+) as cofactor.

It is found in the cytoplasm. It catalyses the reaction apo-[ACP] + CoA = holo-[ACP] + adenosine 3',5'-bisphosphate + H(+). Its function is as follows. Transfers the 4'-phosphopantetheine moiety from coenzyme A to a Ser of acyl-carrier-protein. This is Holo-[acyl-carrier-protein] synthase from Anaeromyxobacter dehalogenans (strain 2CP-1 / ATCC BAA-258).